The sequence spans 174 residues: ATP synthase subunit delta (174 aa).

This sequence belongs to the ATPase delta chain family. As to quaternary structure, F-type ATPases have 2 components, F(1) - the catalytic core - and F(0) - the membrane proton channel. F(1) has five subunits: alpha(3), beta(3), gamma(1), delta(1), epsilon(1). F(0) has three main subunits: a(1), b(2) and c(10-14). The alpha and beta chains form an alternating ring which encloses part of the gamma chain. F(1) is attached to F(0) by a central stalk formed by the gamma and epsilon chains, while a peripheral stalk is formed by the delta and b chains.

It is found in the cell inner membrane. Its function is as follows. F(1)F(0) ATP synthase produces ATP from ADP in the presence of a proton or sodium gradient. F-type ATPases consist of two structural domains, F(1) containing the extramembraneous catalytic core and F(0) containing the membrane proton channel, linked together by a central stalk and a peripheral stalk. During catalysis, ATP synthesis in the catalytic domain of F(1) is coupled via a rotary mechanism of the central stalk subunits to proton translocation. Functionally, this protein is part of the stalk that links CF(0) to CF(1). It either transmits conformational changes from CF(0) to CF(1) or is implicated in proton conduction. The protein is ATP synthase subunit delta of Fusobacterium nucleatum subsp. nucleatum (strain ATCC 25586 / DSM 15643 / BCRC 10681 / CIP 101130 / JCM 8532 / KCTC 2640 / LMG 13131 / VPI 4355).